A 40-amino-acid polypeptide reads, in one-letter code: Large ribosomal subunit protein bL36B (40 aa).

This sequence belongs to the bacterial ribosomal protein bL36 family.

This chain is Large ribosomal subunit protein bL36B, found in Leifsonia xyli subsp. xyli (strain CTCB07).